The following is a 170-amino-acid chain: MSLPDPAELIRQMATDLNAHLSKRGISDPRFIGIRTGGVWVAQALLKALNNPAPLGTLDVSFYRDDFSQNGLHPQVRPSELPFEIEGQHLVLIDDVLMSGRTVRAALNELFDYGRPASVTLVCLLDLDAGELPVRPNVVGATLSLAPDERIKLSGPEPLALELQDLSTAL.

Positions 90 to 102 match the PRPP-binding motif; that stretch reads LVLIDDVLMSGRT.

It belongs to the purine/pyrimidine phosphoribosyltransferase family. PyrR subfamily.

The catalysed reaction is UMP + diphosphate = 5-phospho-alpha-D-ribose 1-diphosphate + uracil. Its function is as follows. Regulates the transcription of the pyrimidine nucleotide (pyr) operon in response to exogenous pyrimidines. Also displays a weak uracil phosphoribosyltransferase activity which is not physiologically significant. This chain is Bifunctional protein PyrR, found in Pseudomonas syringae pv. syringae (strain B728a).